The following is a 237-amino-acid chain: Purine nucleoside phosphorylase DeoD-type (237 aa).

H4 serves as a coordination point for a purine D-ribonucleoside. Phosphate is bound by residues G20, R24, R43, and R87–T90. A purine D-ribonucleoside contacts are provided by residues E179–E181 and S203–D204. D204 functions as the Proton donor in the catalytic mechanism.

Belongs to the PNP/UDP phosphorylase family. As to quaternary structure, homohexamer; trimer of homodimers.

The catalysed reaction is a purine D-ribonucleoside + phosphate = a purine nucleobase + alpha-D-ribose 1-phosphate. It catalyses the reaction a purine 2'-deoxy-D-ribonucleoside + phosphate = a purine nucleobase + 2-deoxy-alpha-D-ribose 1-phosphate. Its function is as follows. Catalyzes the reversible phosphorolytic breakdown of the N-glycosidic bond in the beta-(deoxy)ribonucleoside molecules, with the formation of the corresponding free purine bases and pentose-1-phosphate. This Streptococcus uberis (strain ATCC BAA-854 / 0140J) protein is Purine nucleoside phosphorylase DeoD-type.